The sequence spans 721 residues: Putative cullin-like protein 1 (721 aa).

Residues 651–713 (DRRYAIDAAL…RDYLERDTEN (63 aa)) form the Cullin neddylation domain.

Belongs to the cullin family.

In Arabidopsis thaliana (Mouse-ear cress), this protein is Putative cullin-like protein 1.